The chain runs to 887 residues: Transcriptional regulator DEF1 (887 aa).

Positions 1–13 (MERRQFNTSNIRN) are enriched in polar residues. Disordered stretches follow at residues 1–117 (MERR…IQPG), 203–293 (KRSL…ESNA), 311–330 (NNET…PRQL), 350–542 (PVLG…QQAQ), 555–578 (NRPP…PQQK), 614–675 (QAPQ…QVPK), 696–758 (QRTL…TQEQ), and 813–887 (NNAN…NLLN). Residues 57–75 (SSSQSNSVQNQDQSEDQSQ) are compositionally biased toward low complexity. Over residues 76–107 (LPQQESNTQQESNTQQESNTPSPRASNTSTET) the composition is skewed to polar residues. A coiled-coil region spans residues 199–234 (EEMRKRSLENSRKRELEEAQEREESNKRQHTESSAE). Residues 203–231 (KRSLENSRKRELEEAQEREESNKRQHTES) show a composition bias toward basic and acidic residues. Positions 232 to 254 (SAEPNAESSTESTTESNAESGAE) are enriched in low complexity. A compositionally biased stretch (polar residues) spans 261–270 (AESTTESNVE). The span at 311-326 (NNETNNTGESNSTSQQ) shows a compositional bias: low complexity. The span at 364-393 (KTSLTGSQNKVHSTNTQQSQKHPQQILTNS) shows a compositional bias: polar residues. Low complexity-rich tracts occupy residues 399 to 408 (QQYSAQSQQQ), 428 to 456 (QQQQ…QQEL), 475 to 519 (QQQS…QVQT), and 526 to 542 (QPQT…QQAQ). Low complexity predominate over residues 622–640 (YQHHYQQVQQRQNQQPYMQ). The segment covering 641–658 (SAPTYQQPHVQTPKSTRS) has biased composition (polar residues). Residues 696-710 (QRTLDNGREPERLRT) show a composition bias toward basic and acidic residues. The segment covering 729–745 (RSKQSSNQKPVVKQQSS) has biased composition (polar residues). Low complexity predominate over residues 829–844 (TNTRGGRASTRSSGRP). The span at 865-887 (TDGSQSQNSGKASKISNIRNLLN) shows a compositional bias: polar residues.

It is found in the nucleus. Transcriptional regulator involved in extension of germ tubes into elongated hyphae and maintenance of filamentous growth. Regulates expression of UME6. Acts in a pathway that regulates maintenance of hyphal growth by repressing hyphal-to-yeast transition and allows dissemination within host epithelial tissues. Dispensable for invasion into both host oral epithelial cells and enterocytes, but required for epithelial damage. The protein is Transcriptional regulator DEF1 (DEF1) of Candida albicans (strain SC5314 / ATCC MYA-2876) (Yeast).